Consider the following 90-residue polypeptide: Acylphosphatase (90 aa).

Residues 5–90 enclose the Acylphosphatase-like domain; that stretch reads SFVVHVWGQV…PPQKGGFHTN (86 aa). Catalysis depends on residues arginine 20 and asparagine 38.

This sequence belongs to the acylphosphatase family.

It carries out the reaction an acyl phosphate + H2O = a carboxylate + phosphate + H(+). The chain is Acylphosphatase (acyP) from Aeromonas salmonicida (strain A449).